The primary structure comprises 1033 residues: SIT4-associating protein SAP190 (1033 aa).

Disordered stretches follow at residues 32-82, 147-213, and 768-1033; these read DQDD…TTES, PEII…QVET, and FGND…KEAF. The span at 158–170 shows a compositional bias: basic and acidic residues; that stretch reads ILIERDRKDKKED. A compositionally biased stretch (acidic residues) spans 171 to 182; that stretch reads AEEGGDSEETTN. The span at 183 to 195 shows a compositional bias: basic and acidic residues; sequence DSDHDSGDERSVD. Position 774 is a phosphoserine (serine 774). 2 stretches are compositionally biased toward acidic residues: residues 784-793 and 825-838; these read SEDIIGDTEG and ENEE…EYSD. Phosphoserine occurs at positions 857, 862, and 892. The span at 858–879 shows a compositional bias: basic and acidic residues; it reads DDGKSKSAESEFTDKISEHRDG. Positions 909–924 are enriched in polar residues; that stretch reads SRSQPSDPKLQDQNIF. The span at 932–944 shows a compositional bias: acidic residues; the sequence is GVGDDDDYMDPND. Threonine 990 is modified (phosphothreonine). Residue serine 991 is modified to Phosphoserine. Residues 1000-1018 show a composition bias toward acidic residues; the sequence is ISSDEEDSEDEDEENDMGN.

The protein belongs to the SAPS family. In terms of assembly, associates with the SIT4 protein phosphatase catalytic subunit in a cell-cycle-dependent manner. Post-translationally, hyperphosphorylated in the absence of SIT4.

Its subcellular location is the cytoplasm. In terms of biological role, positive regulator of protein phosphatase SIT4. Involved in the general amino acid control (GAAC) response regulated by TOR. Involved in the dephosphorylation of the elongator complex subunit IKI3. The protein is SIT4-associating protein SAP190 (SAP190) of Saccharomyces cerevisiae (strain ATCC 204508 / S288c) (Baker's yeast).